The following is a 443-amino-acid chain: Ribulose bisphosphate carboxylase large chain (443 aa).

Residues Asn89 and Thr139 each coordinate substrate. Lys141 functions as the Proton acceptor in the catalytic mechanism. Substrate is bound at residue Lys143. The Mg(2+) site is built by Lys167, Asp169, and Glu170. An N6-carboxylysine modification is found at Lys167. The Proton acceptor role is filled by His260. Substrate contacts are provided by Arg261, His293, and Ser345.

The protein belongs to the RuBisCO large chain family. Type I subfamily. Heterohexadecamer of 8 large chains and 8 small chains; disulfide-linked. The disulfide link is formed within the large subunit homodimers. Mg(2+) serves as cofactor. In terms of processing, the disulfide bond which can form in the large chain dimeric partners within the hexadecamer appears to be associated with oxidative stress and protein turnover.

It localises to the plastid. Its subcellular location is the chloroplast. The catalysed reaction is 2 (2R)-3-phosphoglycerate + 2 H(+) = D-ribulose 1,5-bisphosphate + CO2 + H2O. It catalyses the reaction D-ribulose 1,5-bisphosphate + O2 = 2-phosphoglycolate + (2R)-3-phosphoglycerate + 2 H(+). RuBisCO catalyzes two reactions: the carboxylation of D-ribulose 1,5-bisphosphate, the primary event in carbon dioxide fixation, as well as the oxidative fragmentation of the pentose substrate in the photorespiration process. Both reactions occur simultaneously and in competition at the same active site. This chain is Ribulose bisphosphate carboxylase large chain, found in Verbena bonariensis (Argentinian vervain).